The sequence spans 89 residues: Small ribosomal subunit protein uS17 (89 aa).

Belongs to the universal ribosomal protein uS17 family. In terms of assembly, part of the 30S ribosomal subunit.

Functionally, one of the primary rRNA binding proteins, it binds specifically to the 5'-end of 16S ribosomal RNA. The chain is Small ribosomal subunit protein uS17 from Xylella fastidiosa (strain M12).